We begin with the raw amino-acid sequence, 119 residues long: Large ribosomal subunit protein bL20 (119 aa).

This sequence belongs to the bacterial ribosomal protein bL20 family.

Functionally, binds directly to 23S ribosomal RNA and is necessary for the in vitro assembly process of the 50S ribosomal subunit. It is not involved in the protein synthesizing functions of that subunit. The protein is Large ribosomal subunit protein bL20 of Thermoanaerobacter sp. (strain X514).